Here is a 154-residue protein sequence, read N- to C-terminus: Ribosome maturation factor RimP (154 aa).

This sequence belongs to the RimP family.

The protein resides in the cytoplasm. Its function is as follows. Required for maturation of 30S ribosomal subunits. This is Ribosome maturation factor RimP from Desulforudis audaxviator (strain MP104C).